Here is a 235-residue protein sequence, read N- to C-terminus: Secretory carrier-associated membrane protein 5 (235 aa).

Residues methionine 1–arginine 39 lie on the Cytoplasmic side of the membrane. Residues leucine 40–alanine 60 form a helical membrane-spanning segment. At tryptophan 61 to glycine 67 the chain is on the extracellular side. Residues alanine 68 to cysteine 88 form a helical membrane-spanning segment. The Cytoplasmic portion of the chain corresponds to tryptophan 89 to serine 102. The chain crosses the membrane as a helical span at residues phenylalanine 103–glycine 125. At isoleucine 126–alanine 148 the chain is on the extracellular side. The chain crosses the membrane as a helical span at residues valine 149–leucine 169. Residues serine 170–methionine 235 lie on the Cytoplasmic side of the membrane.

This sequence belongs to the SCAMP family. SCAMP5 subfamily. Interacts (via C-terminal part) with SYT1 and SYT2; interaction with synaptotagmins making a link with the SNARE molecules. Interacts with SLC9A7. Expressed both by neuronal and non-neuronal tissues. Expressed in brain, stomach, thyroid, spinal cord, lymph node, trachea, adrenal gland, bone marrow and in the different parts of brain. In thyroid tissues, it is expressed by the follicular epithelial cells. In the adrenal gland tissues it is detected in the zona fasciculata of the cortex region (at protein level).

It is found in the cell membrane. It localises to the golgi apparatus membrane. Its subcellular location is the golgi apparatus. The protein localises to the trans-Golgi network membrane. The protein resides in the recycling endosome membrane. It is found in the cytoplasmic vesicle. It localises to the secretory vesicle. Its subcellular location is the synaptic vesicle membrane. Its function is as follows. Required for the calcium-dependent exocytosis of signal sequence-containing cytokines such as CCL5. Probably acts in cooperation with the SNARE machinery. May play a role in accumulation of expanded polyglutamine (polyQ) protein huntingtin (HTT) in case of endoplasmic reticulum stress by inhibiting the endocytosis pathway. This chain is Secretory carrier-associated membrane protein 5 (SCAMP5), found in Homo sapiens (Human).